Reading from the N-terminus, the 129-residue chain is Small ribosomal subunit protein uS9 (129 aa).

It belongs to the universal ribosomal protein uS9 family.

The polypeptide is Small ribosomal subunit protein uS9 (rpsI) (Helicobacter pylori (strain J99 / ATCC 700824) (Campylobacter pylori J99)).